The following is a 68-amino-acid chain: Neuronal regeneration-related protein (68 aa).

Residues 42 to 68 (EETGAASLTPPGSREFTSPATSYLHPF) form a disordered region.

Interacts with FLNA. Interacts with the latency-associated peptides (LAP) of TGFB1 and TGFB2; the interaction results in a decrease in TGFB autoinduction. Post-translationally, phosphorylated on Ser-59. Phosphorylation decreases stability and activity. In terms of tissue distribution, expressed in brain and fetal lung.

The protein localises to the cytoplasm. May have roles in cellular differentiation. Ectopic expression induces differentiation of fibroblast into myofibroblast and myofibroblast ameboid migration. Increases retinoic-acid regulation of lipid-droplet biogenesis. May also have neural functions. Promotes axonal regeneration and augments motility of gliomas. Down-regulates the expression of TGFB1 and TGFB2 but not of TGFB3. May play a role in the regulation of alveolar generation. This Mus musculus (Mouse) protein is Neuronal regeneration-related protein (Nrep).